Reading from the N-terminus, the 488-residue chain is MGNCFGSRGICDRPKNTNIRLSLPAVCFVWQVSMIILFGVFVRYNEEADTNWVYTKKEKNITSDIENDFYFRYPSFQDVHVMIFVGFGFLMTFLKRYSFGAVGFNFLIAAFGLQWALLMQGWFSPLGDDGKIKIGIENLINADFCVASCLIAYGAVLGKVSPVQLLVMTLFGITLYAVEEFIILRVLNAKDAGGSMVIHTFGAYYGLSISRVLYRPNLNKSKHMNGSVYHSDVFAMIGTLFLWMFWPSFNSAICNHGDGQHRAAINTYLALASTVLTTVAISSMFEKTGKLDMVHIQNSTLAGGVAVGTAAEFMLMPYGSLIVGFFCGIISTLGYIYLTPFLEERLKIQDTCGIHNLHAMPGVIGGIVGAISAAAASKEVYGDLGLKNIFSIEGSNVTRLPTVQGGYQAAALCVALCFGIGGGTFVGLVLKLPIWGDPADEHCFNDEMYWEVPEDEESIIPPVLSYNNHMIPNNKHEEMRETNFAEQS.

The Cytoplasmic portion of the chain corresponds to 1 to 21 (MGNCFGSRGICDRPKNTNIRL). The helical transmembrane segment at 22–42 (SLPAVCFVWQVSMIILFGVFV) threads the bilayer. Residues 43-73 (RYNEEADTNWVYTKKEKNITSDIENDFYFRY) lie on the Extracellular side of the membrane. Asn-60 carries N-linked (GlcNAc...) asparagine glycosylation. The chain crosses the membrane as a helical span at residues 74–94 (PSFQDVHVMIFVGFGFLMTFL). Residues 95–98 (KRYS) lie on the Cytoplasmic side of the membrane. The chain crosses the membrane as a helical span at residues 99-119 (FGAVGFNFLIAAFGLQWALLM). The Extracellular portion of the chain corresponds to 120–139 (QGWFSPLGDDGKIKIGIENL). The chain crosses the membrane as a helical span at residues 140-160 (INADFCVASCLIAYGAVLGKV). The Cytoplasmic portion of the chain corresponds to 161-162 (SP). A helical transmembrane segment spans residues 163 to 183 (VQLLVMTLFGITLYAVEEFII). The Extracellular portion of the chain corresponds to 184-191 (LRVLNAKD). A helical membrane pass occupies residues 192 to 214 (AGGSMVIHTFGAYYGLSISRVLY). Residues 215-232 (RPNLNKSKHMNGSVYHSD) are Cytoplasmic-facing. A helical membrane pass occupies residues 233 to 253 (VFAMIGTLFLWMFWPSFNSAI). Over 254-264 (CNHGDGQHRAA) the chain is Extracellular. Residues 265 to 285 (INTYLALASTVLTTVAISSMF) form a helical membrane-spanning segment. Residues 286–298 (EKTGKLDMVHIQN) are Cytoplasmic-facing. The chain crosses the membrane as a helical span at residues 299 to 319 (STLAGGVAVGTAAEFMLMPYG). Residue Ser-320 is a topological domain, extracellular. Residues 321–341 (LIVGFFCGIISTLGYIYLTPF) traverse the membrane as a helical segment. Residues 342-356 (LEERLKIQDTCGIHN) lie on the Cytoplasmic side of the membrane. Residues 357–377 (LHAMPGVIGGIVGAISAAAAS) form a helical membrane-spanning segment. The Extracellular segment spans residues 378 to 409 (KEVYGDLGLKNIFSIEGSNVTRLPTVQGGYQA). A helical transmembrane segment spans residues 410 to 430 (AALCVALCFGIGGGTFVGLVL). Residues 431–488 (KLPIWGDPADEHCFNDEMYWEVPEDEESIIPPVLSYNNHMIPNNKHEEMRETNFAEQS) are Cytoplasmic-facing.

This sequence belongs to the ammonium transporter (TC 2.A.49) family. Rh subfamily. Homotrimer. In terms of tissue distribution, at larval stages, expressed only in the yolk sac and gill. However, the kidney and the gills are major sites of expression in adults.

The protein resides in the apical cell membrane. Functionally, functions as an ammonia transporter. May play a role in the elimination of ammonia in the gill. This is Ammonium transporter Rh type C-like 2 (rhcgl2) from Danio rerio (Zebrafish).